The chain runs to 188 residues: Adenine phosphoribosyltransferase (188 aa).

Belongs to the purine/pyrimidine phosphoribosyltransferase family. Homodimer.

The protein resides in the cytoplasm. It catalyses the reaction AMP + diphosphate = 5-phospho-alpha-D-ribose 1-diphosphate + adenine. Its pathway is purine metabolism; AMP biosynthesis via salvage pathway; AMP from adenine: step 1/1. Functionally, catalyzes a salvage reaction resulting in the formation of AMP, that is energically less costly than de novo synthesis. The polypeptide is Adenine phosphoribosyltransferase (Paraburkholderia xenovorans (strain LB400)).